Consider the following 417-residue polypeptide: Acetate kinase (417 aa).

Asparagine 9 is a binding site for Mg(2+). Lysine 16 is a binding site for ATP. Position 90 (arginine 90) interacts with substrate. Aspartate 147 serves as the catalytic Proton donor/acceptor. ATP-binding positions include 207 to 211, 282 to 284, and 330 to 334; these read HIGNG, DLR, and GIGEN. Glutamate 384 contacts Mg(2+).

This sequence belongs to the acetokinase family. In terms of assembly, homodimer. It depends on Mg(2+) as a cofactor. Mn(2+) serves as cofactor.

It localises to the cytoplasm. It carries out the reaction acetate + ATP = acetyl phosphate + ADP. It participates in metabolic intermediate biosynthesis; acetyl-CoA biosynthesis; acetyl-CoA from acetate: step 1/2. Its function is as follows. Catalyzes the formation of acetyl phosphate from acetate and ATP. Can also catalyze the reverse reaction. This is Acetate kinase from Staphylococcus epidermidis (strain ATCC 35984 / DSM 28319 / BCRC 17069 / CCUG 31568 / BM 3577 / RP62A).